A 725-amino-acid chain; its full sequence is Catalase-peroxidase (725 aa).

Composition is skewed to polar residues over residues 1-12 and 23-32; these read MSTSNDPSNNAS and PKQSAGSGTA. A signal peptide spans 1–20; the sequence is MSTSNDPSNNASAGKCPFHA. Residues 1 to 35 form a disordered region; it reads MSTSNDPSNNASAGKCPFHAETPKQSAGSGTANRD. The segment at residues 105 to 226 is a cross-link (tryptophyl-tyrosyl-methioninium (Trp-Tyr) (with M-252)); sequence WHGAGTYRTV…IGATEMGLIY (122 aa). The active-site Proton acceptor is the His106. The segment at residues 226–252 is a cross-link (tryptophyl-tyrosyl-methioninium (Tyr-Met) (with W-105)); the sequence is YVNPEGPNASGEPLSAAAAIRATFGNM. His267 is a heme b binding site.

It belongs to the peroxidase family. Peroxidase/catalase subfamily. Homodimer or homotetramer. Heme b is required as a cofactor. Post-translationally, formation of the three residue Trp-Tyr-Met cross-link is important for the catalase, but not the peroxidase activity of the enzyme.

The enzyme catalyses H2O2 + AH2 = A + 2 H2O. It catalyses the reaction 2 H2O2 = O2 + 2 H2O. Its function is as follows. Bifunctional enzyme with both catalase and broad-spectrum peroxidase activity. The sequence is that of Catalase-peroxidase from Klebsiella pneumoniae subsp. pneumoniae (strain ATCC 700721 / MGH 78578).